The sequence spans 364 residues: mRNA decay activator protein ZFP36L2-B (364 aa).

The span at 102–111 (SFSENGERSQ) shows a compositional bias: basic and acidic residues. Positions 102-129 (SFSENGERSQHLLHLQQQQQQQKAGAQV) are disordered. Positions 113 to 123 (LLHLQQQQQQQ) are enriched in low complexity. Residues 133 to 138 (RYKTEL) carry the RNA-binding motif. C3H1-type zinc fingers lie at residues 133-161 (RYKT…HGFH) and 171-199 (KYKT…HNAE). The tract at residues 150–191 (YGEKCQFAHGFHELRSLTRHPKYKTELCRTFHTIGFCPYGPR) is RNA-binding. A disordered region spans residues 308–350 (SESPVFDAPPSPPDSLSDRDSYLSGSLSSGSLSGSDSPTLDSN). Residues 329–348 (YLSGSLSSGSLSGSDSPTLD) are compositionally biased toward low complexity.

In terms of processing, phosphorylated. In terms of tissue distribution, remains unlocalized in the egg and early embryo. From stage 21 (late neurula), expressed around the pronephros in the anterior crests, pharyngeal arch, hindbrain, mesodermal tissues around the pronephros and tail-bud. This expression pattern is maintained up to the tadpole stage.

It localises to the nucleus. It is found in the cytoplasm. In terms of biological role, zinc-finger RNA-binding protein that destabilizes several cytoplasmic AU-rich element (ARE)-containing mRNA transcripts by promoting their poly(A) tail removal or deadenylation, and hence provide a mechanism for attenuating protein synthesis. Acts as a 3'-untranslated region (UTR) ARE mRNA-binding adapter protein to communicate signaling events to the mRNA decay machinery. Functions by recruiting the CCR4-NOT deadenylase complex and probably other components of the cytoplasmic RNA decay machinery to the bound ARE-containing mRNAs, and hence promotes ARE-mediated mRNA deadenylation and decay processes. Binds to 3'-UTR ARE of numerous mRNAs. Also induces the degradation of ARE-containing mRNAs even in absence of poly(A) tail. Required for tubulogenesis during pronephros development. This Xenopus laevis (African clawed frog) protein is mRNA decay activator protein ZFP36L2-B (zfp36l2-B).